A 720-amino-acid polypeptide reads, in one-letter code: MGKTKSRGRRAEKKNKKNEPGFNEDVSNLDSDVTITNQEPLSSSMSSTSGIPNTFFGLVDNNELDYFKQAESTLNINAFETDEERQGFINSVLEEAQGKELKLVTNQICSKLMERLILFANHNQLKKIFKQFQNHFVSLAFHKYASHVLETLLVRSAALIEKELTQTDEEKLEEAEEEEAEEEEAEEDSLNNDVPMEDLFISMLNEFKPHLTTMIDHSYASHVLRLLILILAGKELPSSVTSNSTLRSKKSKIARKMIEIKDNEDFDRAFQTPQSFKNELREYCQTIIVGLDTKSARELSIHKIGSPVLQLLIQVEGLVDRERSFWHLIFAKDSEGKDSVEESFVEYLLSESVGSHFLESIIKNDGARPKYIERLYKLYMKDRVLKLAKRSTTGVYIIQALLFKLKPVEVEYILDQIIPELAELISIAENQNLDLANKLIDASISRGNYRRDEIINQLFIKFAPNYDIENPSDNTSTEFIENILQLTGSTLGNTRDDWPTAEERKRALFLEKLMEYDYKFVICTWFNFMALPIERFVQMCFHGVFCHVVEKALIVEPEEPKPIQILRKRLLNIFQGQIVGLACNSYGSHIVDSLWNFTVLLPMYKDRIASELLGDSNKVKESTYGRLVWKNWGMELFVRKKYDWKALIKQQEQEYYGETEDSTEKRAKKPIELKMERLAEEKRRQEEMAERAQSGYTKRKLEEATGTASEKKQKLRGRRR.

A compositionally biased stretch (basic residues) spans 1–16 (MGKTKSRGRRAEKKNK). Positions 1–31 (MGKTKSRGRRAEKKNKKNEPGFNEDVSNLDS) are disordered. Pumilio repeat units follow at residues 95–130 (EAQG…KIFK) and 131–166 (QFQN…ELTQ). The segment at 165-190 (TQTDEEKLEEAEEEEAEEEEAEEDSL) is disordered. The segment covering 170–190 (EKLEEAEEEEAEEEEAEEDSL) has biased composition (acidic residues). 6 Pumilio repeats span residues 206-242 (EFKP…SVTS), 290-331 (GLDT…LIFA), 339-377 (SVEE…RLYK), 379-415 (YMKD…YILD), 530-567 (ALPI…QILR), and 572-610 (NIFQ…RIAS). The tract at residues 658–720 (ETEDSTEKRA…KKQKLRGRRR (63 aa)) is disordered. Basic and acidic residues predominate over residues 662 to 690 (STEKRAKKPIELKMERLAEEKRRQEEMAE).

This sequence belongs to the NOP9 family.

The protein localises to the nucleus. It is found in the nucleolus. RNA-binding nucleolar protein required for pre-rRNA processing. Involved in production of 18S rRNA and assembly of small ribosomal subunit. The sequence is that of Nucleolar protein 9 (NOP9) from Candida albicans (strain SC5314 / ATCC MYA-2876) (Yeast).